We begin with the raw amino-acid sequence, 608 residues long: Fatty acid amide hydrolase (608 aa).

Residues Lys206 and Ser282 each act as charge relay system in the active site. 303 to 306 (GGGS) lines the substrate pocket. Residue Ser306 is the Acyl-ester intermediate of the active site.

It belongs to the amidase family. Forms homodimers.

Its subcellular location is the endoplasmic reticulum membrane. It localises to the cell membrane. The catalysed reaction is N-(9Z,12Z-octadecadienoyl)-ethanolamine + H2O = ethanolamine + (9Z,12Z)-octadecadienoate. It carries out the reaction N-hexadecanoylethanolamine + H2O = ethanolamine + hexadecanoate. The enzyme catalyses N-dodecanoylethanolamine + H2O = dodecanoate + ethanolamine. With respect to regulation, inhibited by methyl arachidonyl fluorophosphonate (MAFP). Its function is as follows. Catalyzes the hydrolysis of bioactive endogenous fatty acid amides to their corresponding acids. The hydrolysis of endogenous amidated lipids terminates their participation as lipid mediators in various signaling systems. Converts a wide range of N-acylethanolamines (NAEs) to their corresponding free fatty acids and ethanolamine. This chain is Fatty acid amide hydrolase, found in Oryza sativa subsp. indica (Rice).